The primary structure comprises 107 residues: Large ribosomal subunit protein uL24 (107 aa).

Belongs to the universal ribosomal protein uL24 family. As to quaternary structure, part of the 50S ribosomal subunit.

In terms of biological role, one of two assembly initiator proteins, it binds directly to the 5'-end of the 23S rRNA, where it nucleates assembly of the 50S subunit. Functionally, one of the proteins that surrounds the polypeptide exit tunnel on the outside of the subunit. The protein is Large ribosomal subunit protein uL24 of Gluconacetobacter diazotrophicus (strain ATCC 49037 / DSM 5601 / CCUG 37298 / CIP 103539 / LMG 7603 / PAl5).